Reading from the N-terminus, the 254-residue chain is Coiled-coil domain-containing protein 152 (254 aa).

Residues 61-246 (SIKEECATLH…LEQRLSVGKD (186 aa)) adopt a coiled-coil conformation.

Detected in stomach.

The sequence is that of Coiled-coil domain-containing protein 152 (CCDC152) from Homo sapiens (Human).